The sequence spans 449 residues: Protein phosphatase fem-2 (449 aa).

The interval 28–34 (EEAFADE) is interaction with fem-1 and fem-3. The interaction with fem-3 stretch occupies residues 54–56 (IRF). The PPM-type phosphatase domain maps to 160-424 (GIHVSGDQLK…DNVSVVIGFL (265 aa)). Mg(2+) contacts are provided by D202, G203, D370, and D415.

It belongs to the PP2C family. Component of a complex containing fem-1, fem-2 and fem-3. Interacts (via N-terminus) with fem-1 and fem-3. Component of the CBC(fem-1) E3 ubiquitin-protein ligase complex, at least composed of cul-2, elc-1, tra-1, fem-1, fem-2 and fem-3; mediates the ubiquitination and subsequent proteasomal degradation of tra-1. Interacts with tra-1. Interacts with sel-10. Mg(2+) is required as a cofactor. The cofactor is Mn(2+).

It carries out the reaction O-phospho-L-seryl-[protein] + H2O = L-seryl-[protein] + phosphate. The enzyme catalyses O-phospho-L-threonyl-[protein] + H2O = L-threonyl-[protein] + phosphate. Functionally, dephosphorylates auto-phosphorylated Ca(2+)/calmodulin-dependent protein kinase unc-43/CAMKII in vitro. Involved in the regulation of sex determination. Together with fem-3, required for male sexual development by promoting the proteasomal-mediated degradation of tra-1, a transcription repressor of male-specific genes. Promotes apoptosis. The polypeptide is Protein phosphatase fem-2 (Caenorhabditis elegans).